We begin with the raw amino-acid sequence, 241 residues long: Leucyl/phenylalanyl-tRNA--protein transferase (241 aa).

It belongs to the L/F-transferase family.

The protein localises to the cytoplasm. The catalysed reaction is N-terminal L-lysyl-[protein] + L-leucyl-tRNA(Leu) = N-terminal L-leucyl-L-lysyl-[protein] + tRNA(Leu) + H(+). It catalyses the reaction N-terminal L-arginyl-[protein] + L-leucyl-tRNA(Leu) = N-terminal L-leucyl-L-arginyl-[protein] + tRNA(Leu) + H(+). It carries out the reaction L-phenylalanyl-tRNA(Phe) + an N-terminal L-alpha-aminoacyl-[protein] = an N-terminal L-phenylalanyl-L-alpha-aminoacyl-[protein] + tRNA(Phe). Its function is as follows. Functions in the N-end rule pathway of protein degradation where it conjugates Leu, Phe and, less efficiently, Met from aminoacyl-tRNAs to the N-termini of proteins containing an N-terminal arginine or lysine. This Neisseria meningitidis serogroup C (strain 053442) protein is Leucyl/phenylalanyl-tRNA--protein transferase.